Reading from the N-terminus, the 350-residue chain is DNA polymerase IV (350 aa).

The region spanning 7 to 188 is the UmuC domain; it reads IIHIDMDYFF…LPVKKLFGVG (182 aa). The Mg(2+) site is built by D11 and D106. E107 is an active-site residue.

The protein belongs to the DNA polymerase type-Y family. As to quaternary structure, monomer. The cofactor is Mg(2+).

Its subcellular location is the cytoplasm. It carries out the reaction DNA(n) + a 2'-deoxyribonucleoside 5'-triphosphate = DNA(n+1) + diphosphate. Its function is as follows. Poorly processive, error-prone DNA polymerase involved in untargeted mutagenesis. Copies undamaged DNA at stalled replication forks, which arise in vivo from mismatched or misaligned primer ends. These misaligned primers can be extended by PolIV. Exhibits no 3'-5' exonuclease (proofreading) activity. May be involved in translesional synthesis, in conjunction with the beta clamp from PolIII. The polypeptide is DNA polymerase IV (Francisella philomiragia subsp. philomiragia (strain ATCC 25017 / CCUG 19701 / FSC 153 / O#319-036)).